Consider the following 410-residue polypeptide: Putative nickel insertion protein (410 aa).

The protein belongs to the LarC family.

The polypeptide is Putative nickel insertion protein (Cyanothece sp. (strain PCC 7425 / ATCC 29141)).